Here is a 254-residue protein sequence, read N- to C-terminus: Phosphatidylglycerol--prolipoprotein diacylglyceryl transferase (254 aa).

Helical transmembrane passes span 11–31, 49–69, 84–104, and 109–129; these read LAIR…LLLA, FLIA…IFEF, QGGL…YIYL, and ESFF…QAIG. Residue Arg130 coordinates a 1,2-diacyl-sn-glycero-3-phospho-(1'-sn-glycerol). The next 3 helical transmembrane spans lie at 169–189, 196–216, and 228–248; these read PTFL…VYLL, GIVF…IEGL, and VAQL…YNII.

This sequence belongs to the Lgt family.

It is found in the cell membrane. It catalyses the reaction L-cysteinyl-[prolipoprotein] + a 1,2-diacyl-sn-glycero-3-phospho-(1'-sn-glycerol) = an S-1,2-diacyl-sn-glyceryl-L-cysteinyl-[prolipoprotein] + sn-glycerol 1-phosphate + H(+). Its pathway is protein modification; lipoprotein biosynthesis (diacylglyceryl transfer). Catalyzes the transfer of the diacylglyceryl group from phosphatidylglycerol to the sulfhydryl group of the N-terminal cysteine of a prolipoprotein, the first step in the formation of mature lipoproteins. The chain is Phosphatidylglycerol--prolipoprotein diacylglyceryl transferase from Clostridium botulinum (strain ATCC 19397 / Type A).